An 87-amino-acid polypeptide reads, in one-letter code: DNA-directed RNA polymerase subunit omega (87 aa).

The protein belongs to the RNA polymerase subunit omega family. The RNAP catalytic core consists of 2 alpha, 1 beta, 1 beta' and 1 omega subunit. When a sigma factor is associated with the core the holoenzyme is formed, which can initiate transcription.

The enzyme catalyses RNA(n) + a ribonucleoside 5'-triphosphate = RNA(n+1) + diphosphate. Functionally, promotes RNA polymerase assembly. Latches the N- and C-terminal regions of the beta' subunit thereby facilitating its interaction with the beta and alpha subunits. This chain is DNA-directed RNA polymerase subunit omega, found in Pseudomonas fluorescens (strain Pf0-1).